The sequence spans 372 residues: Putative glutamate--cysteine ligase 2 (372 aa).

It belongs to the glutamate--cysteine ligase type 2 family. YbdK subfamily.

The enzyme catalyses L-cysteine + L-glutamate + ATP = gamma-L-glutamyl-L-cysteine + ADP + phosphate + H(+). Functionally, ATP-dependent carboxylate-amine ligase which exhibits weak glutamate--cysteine ligase activity. The sequence is that of Putative glutamate--cysteine ligase 2 from Rhodopirellula baltica (strain DSM 10527 / NCIMB 13988 / SH1).